A 376-amino-acid polypeptide reads, in one-letter code: Homoserine dehydrogenase (376 aa).

NADP(+) is bound by residues Asn-17 and Ile-18. Residue Ile-18 participates in NAD(+) binding. NADPH contacts are provided by Ile-18, Lys-67, Thr-99, and Lys-123. Thr-99 and Lys-123 together coordinate NADP(+). Residue Thr-99 coordinates NAD(+). Na(+) contacts are provided by Glu-150, Val-153, Ala-155, and Leu-157. Ser-201 carries the phosphoserine modification. NADP(+) contacts are provided by Gly-213 and Glu-216. L-homoserine is bound by residues Glu-216 and Asp-227. Residue Lys-231 is the Proton donor of the active site. Residue Gly-349 coordinates NADP(+). Gly-349 provides a ligand contact to NAD(+). NADPH is bound at residue Gly-349.

It belongs to the homoserine dehydrogenase family. It depends on a metal cation as a cofactor.

It carries out the reaction L-homoserine + NADP(+) = L-aspartate 4-semialdehyde + NADPH + H(+). The enzyme catalyses L-homoserine + NAD(+) = L-aspartate 4-semialdehyde + NADH + H(+). It functions in the pathway amino-acid biosynthesis; L-methionine biosynthesis via de novo pathway; L-homoserine from L-aspartate: step 3/3. Its pathway is amino-acid biosynthesis; L-threonine biosynthesis; L-threonine from L-aspartate: step 3/5. In terms of biological role, catalyzes the conversion of L-aspartate-beta-semialdehyde (L-Asa) to L-homoserine (L-Hse), the third step in the biosynthesis of amino acids that derive from aspartate (the aspartate family of amino acids), including methioinine and threonine, the latter of which is a precursor to isoleucine; production of homoserine leads to a branch-point in the pathway as it can either be O-phosphorylated for processing to threonine, or O-acylated for processing to methionine. This chain is Homoserine dehydrogenase, found in Schizosaccharomyces pombe (strain 972 / ATCC 24843) (Fission yeast).